The sequence spans 124 residues: Large ribosomal subunit protein uL14 (124 aa).

This sequence belongs to the universal ribosomal protein uL14 family. As to quaternary structure, part of the 50S ribosomal subunit. Forms a cluster with proteins L3 and L19. In the 70S ribosome, L14 and L19 interact and together make contacts with the 16S rRNA in bridges B5 and B8.

In terms of biological role, binds to 23S rRNA. Forms part of two intersubunit bridges in the 70S ribosome. The chain is Large ribosomal subunit protein uL14 from Clostridium novyi (strain NT).